A 1060-amino-acid polypeptide reads, in one-letter code: FACT complex subunit SPT16 (1060 aa).

A disordered region spans residues 458–490 (FNDDNETQKENNNNNNKRPGLSQTSNTTALKLE). Residues 478-490 (LSQTSNTTALKLE) show a composition bias toward polar residues. Residues 508 to 532 (NADDANSEKLRQEIQIKLHEKRLQE) are a coiled coil. Residues 977-1060 (QGESDEEEES…AKADRNSGFD (84 aa)) are disordered. Composition is skewed to acidic residues over residues 979-990 (ESDEEEESDEES) and 997-1044 (EDPQ…EDWD). Positions 1045-1060 (ALERKAAKADRNSGFD) are enriched in basic and acidic residues.

This sequence belongs to the peptidase M24 family. SPT16 subfamily. In terms of assembly, forms a stable heterodimer with POB3. The SPT16-POB3 dimer weakly associates with multiple molecules of NHP6 to form the FACT complex.

It is found in the nucleus. It localises to the chromosome. In terms of biological role, component of the FACT complex, a general chromatin factor that acts to reorganize nucleosomes. The FACT complex is involved in multiple processes that require DNA as a template such as mRNA elongation, DNA replication and DNA repair. During transcription elongation the FACT complex acts as a histone chaperone that both destabilizes and restores nucleosomal structure. It facilitates the passage of RNA polymerase II and transcription by promoting the dissociation of one histone H2A-H2B dimer from the nucleosome, then subsequently promotes the reestablishment of the nucleosome following the passage of RNA polymerase II. This is FACT complex subunit SPT16 (CDC68) from Candida albicans (strain SC5314 / ATCC MYA-2876) (Yeast).